The sequence spans 394 residues: Lipoyl synthase, chloroplastic (394 aa).

A chloroplast-targeting transit peptide spans 1 to 36; the sequence is MMHHCSITKPTFSISISTQKLHHHSSKFLNLGFRIR. 7 residues coordinate [4Fe-4S] cluster: Cys-127, Cys-132, Cys-138, Cys-158, Cys-162, Cys-165, and Ser-373. Positions 141 to 362 constitute a Radical SAM core domain; the sequence is GGGDGVATAT…KTYGESIGFR (222 aa).

It belongs to the radical SAM superfamily. Lipoyl synthase family. [4Fe-4S] cluster is required as a cofactor. Expressed in roots, leaves and flowers.

It is found in the plastid. It localises to the chloroplast. The enzyme catalyses [[Fe-S] cluster scaffold protein carrying a second [4Fe-4S](2+) cluster] + N(6)-octanoyl-L-lysyl-[protein] + 2 oxidized [2Fe-2S]-[ferredoxin] + 2 S-adenosyl-L-methionine + 4 H(+) = [[Fe-S] cluster scaffold protein] + N(6)-[(R)-dihydrolipoyl]-L-lysyl-[protein] + 4 Fe(3+) + 2 hydrogen sulfide + 2 5'-deoxyadenosine + 2 L-methionine + 2 reduced [2Fe-2S]-[ferredoxin]. It participates in protein modification; protein lipoylation via endogenous pathway; protein N(6)-(lipoyl)lysine from octanoyl-[acyl-carrier-protein]: step 2/2. In terms of biological role, catalyzes the radical-mediated insertion of two sulfur atoms into the C-6 and C-8 positions of the octanoyl moiety bound to the lipoyl domains of lipoate-dependent enzymes, thereby converting the octanoylated domains into lipoylated derivatives. Together with LIP2P and LIP2P2 is essential for de novo plastidial protein lipoylation during seed development. In Arabidopsis thaliana (Mouse-ear cress), this protein is Lipoyl synthase, chloroplastic.